The following is an 85-amino-acid chain: Large ribosomal subunit protein bL27 (85 aa).

The disordered stretch occupies residues 1-21 (MAHKKAGGSTRNGRDSNAQRL). Polar residues predominate over residues 9–19 (STRNGRDSNAQ).

This sequence belongs to the bacterial ribosomal protein bL27 family.

This chain is Large ribosomal subunit protein bL27, found in Pectobacterium carotovorum subsp. carotovorum (strain PC1).